The following is a 608-amino-acid chain: Cytoplasmic dynein 1 intermediate chain 1 (608 aa).

Composition is skewed to basic and acidic residues over residues 1 to 13 and 20 to 60; these read MSDK…ELER and QIRE…RETE. Residues 1 to 106 form a disordered region; sequence MSDKSDLKAE…SGDLGPLTRR (106 aa). Ser-2 is modified (N-acetylserine). A Phosphoserine modification is found at Ser-50. Pro residues predominate over residues 70–79; the sequence is PEPPLVPTPM. The segment covering 80 to 90 has biased composition (low complexity); that stretch reads SPSSKSVSTPS. Ser-83 is subject to Phosphoserine. Thr-88 carries the phosphothreonine modification. Ser-90, Ser-94, and Ser-97 each carry phosphoserine. The interaction with DYNLT1 stretch occupies residues 110-126; that stretch reads KLGVSKITQVDFLPREV. Residues 132–184 are disordered; sequence ETQTPLATHQSEEDEDDEEMVEPKGDQDSEQENEDKKQEVKEAPPRELTEEEK. Thr-139 carries the post-translational modification Phosphothreonine. Phosphoserine is present on residues Ser-142 and Ser-160. Over residues 165–184 the composition is skewed to basic and acidic residues; sequence EDKKQEVKEAPPRELTEEEK. WD repeat units lie at residues 248 to 297, 301 to 341, 350 to 391, 400 to 440, 445 to 490, 493 to 533, and 539 to 578; these read SKHR…TTPE, HCQS…RTPV, AHTH…TPQE, SKPV…AGIG, GHQG…PLYS, DNAD…EVPT, and EGAS…VPHN. The residue at position 598 (Ser-598) is a Phosphoserine.

The protein belongs to the dynein intermediate chain family. In terms of assembly, homodimer. The cytoplasmic dynein 1 complex consists of two catalytic heavy chains (HCs) and a number of non-catalytic subunits presented by intermediate chains (ICs), light intermediate chains (LICs) and light chains (LCs); the composition seems to vary in respect to the IC, LIC and LC composition. The heavy chain homodimer serves as a scaffold for the probable homodimeric assembly of the respective non-catalytic subunits. The ICs and LICs bind directly to the HC dimer and the LCs assemble on the IC dimer. Interacts with DYNC1H1. Interacts with DYNLT1 and DYNLT3. Interacts with DCTN1. Interacts with MCRS1; the interaction is required for the proper distribution of centriolar satellites.

Its subcellular location is the cytoplasm. The protein resides in the chromosome. The protein localises to the centromere. It is found in the kinetochore. It localises to the cytoskeleton. Its subcellular location is the spindle pole. Its function is as follows. Acts as one of several non-catalytic accessory components of the cytoplasmic dynein 1 complex that are thought to be involved in linking dynein to cargos and to adapter proteins that regulate dynein function. Cytoplasmic dynein 1 acts as a motor for the intracellular retrograde motility of vesicles and organelles along microtubules. The intermediate chains mediate the binding of dynein to dynactin via its 150 kDa component (p150-glued) DCTN1. May play a role in mediating the interaction of cytoplasmic dynein with membranous organelles and kinetochores. This is Cytoplasmic dynein 1 intermediate chain 1 (DYNC1I1) from Bos taurus (Bovine).